The following is a 151-amino-acid chain: SsrA-binding protein (151 aa).

Positions 124 to 151 (GKKLHDKRESEKERDWNRQKSRLLKAHG) are disordered. The span at 129–141 (DKRESEKERDWNR) shows a compositional bias: basic and acidic residues. Residues 142–151 (QKSRLLKAHG) are compositionally biased toward basic residues.

It belongs to the SmpB family.

It is found in the cytoplasm. Its function is as follows. Required for rescue of stalled ribosomes mediated by trans-translation. Binds to transfer-messenger RNA (tmRNA), required for stable association of tmRNA with ribosomes. tmRNA and SmpB together mimic tRNA shape, replacing the anticodon stem-loop with SmpB. tmRNA is encoded by the ssrA gene; the 2 termini fold to resemble tRNA(Ala) and it encodes a 'tag peptide', a short internal open reading frame. During trans-translation Ala-aminoacylated tmRNA acts like a tRNA, entering the A-site of stalled ribosomes, displacing the stalled mRNA. The ribosome then switches to translate the ORF on the tmRNA; the nascent peptide is terminated with the 'tag peptide' encoded by the tmRNA and targeted for degradation. The ribosome is freed to recommence translation, which seems to be the essential function of trans-translation. The chain is SsrA-binding protein from Rhizobium johnstonii (strain DSM 114642 / LMG 32736 / 3841) (Rhizobium leguminosarum bv. viciae).